The chain runs to 610 residues: Glutamine--fructose-6-phosphate aminotransferase [isomerizing] (610 aa).

The active-site Nucleophile; for GATase activity is the Cys-2. The Glutamine amidotransferase type-2 domain maps to 2 to 220; that stretch reads CGIISAISKK…EGDIAILSHK (219 aa). SIS domains are found at residues 289-429 and 461-600; these read AHAL…LKTN and LAKE…IDKP. Residue Lys-605 is the For Fru-6P isomerization activity of the active site.

As to quaternary structure, homodimer.

Its subcellular location is the cytoplasm. It catalyses the reaction D-fructose 6-phosphate + L-glutamine = D-glucosamine 6-phosphate + L-glutamate. Its function is as follows. Catalyzes the first step in hexosamine metabolism, converting fructose-6P into glucosamine-6P using glutamine as a nitrogen source. The sequence is that of Glutamine--fructose-6-phosphate aminotransferase [isomerizing] from Buchnera aphidicola subsp. Baizongia pistaciae (strain Bp).